The following is a 98-amino-acid chain: Large ribosomal subunit protein bL25 (98 aa).

A disordered region spans residues 1 to 22; the sequence is MANFVLNATARNEDKQGKGASR.

The protein belongs to the bacterial ribosomal protein bL25 family. Part of the 50S ribosomal subunit; part of the 5S rRNA/L5/L18/L25 subcomplex. Contacts the 5S rRNA. Binds to the 5S rRNA independently of L5 and L18.

This is one of the proteins that binds to the 5S RNA in the ribosome where it forms part of the central protuberance. The chain is Large ribosomal subunit protein bL25 from Acinetobacter baylyi (strain ATCC 33305 / BD413 / ADP1).